Here is a 108-residue protein sequence, read N- to C-terminus: Thiosulfate sulfurtransferase GlpE (108 aa).

One can recognise a Rhodanese domain in the interval 17–105 (QEKEAVLVDI…WQRQFPAEVA (89 aa)). Catalysis depends on C65, which acts as the Cysteine persulfide intermediate.

The protein belongs to the GlpE family.

It localises to the cytoplasm. It carries out the reaction thiosulfate + hydrogen cyanide = thiocyanate + sulfite + 2 H(+). It catalyses the reaction thiosulfate + [thioredoxin]-dithiol = [thioredoxin]-disulfide + hydrogen sulfide + sulfite + 2 H(+). Functionally, transferase that catalyzes the transfer of sulfur from thiosulfate to thiophilic acceptors such as cyanide or dithiols. May function in a CysM-independent thiosulfate assimilation pathway by catalyzing the conversion of thiosulfate to sulfite, which can then be used for L-cysteine biosynthesis. The polypeptide is Thiosulfate sulfurtransferase GlpE (Escherichia coli O127:H6 (strain E2348/69 / EPEC)).